The sequence spans 294 residues: Phosphatidylserine decarboxylase proenzyme (294 aa).

Residues D113, H169, and S256 each act as charge relay system; for autoendoproteolytic cleavage activity in the active site. S256 acts as the Schiff-base intermediate with substrate; via pyruvic acid; for decarboxylase activity in catalysis. S256 carries the pyruvic acid (Ser); by autocatalysis modification.

It belongs to the phosphatidylserine decarboxylase family. PSD-B subfamily. Prokaryotic type II sub-subfamily. Heterodimer of a large membrane-associated beta subunit and a small pyruvoyl-containing alpha subunit. The cofactor is pyruvate. Is synthesized initially as an inactive proenzyme. Formation of the active enzyme involves a self-maturation process in which the active site pyruvoyl group is generated from an internal serine residue via an autocatalytic post-translational modification. Two non-identical subunits are generated from the proenzyme in this reaction, and the pyruvate is formed at the N-terminus of the alpha chain, which is derived from the carboxyl end of the proenzyme. The autoendoproteolytic cleavage occurs by a canonical serine protease mechanism, in which the side chain hydroxyl group of the serine supplies its oxygen atom to form the C-terminus of the beta chain, while the remainder of the serine residue undergoes an oxidative deamination to produce ammonia and the pyruvoyl prosthetic group on the alpha chain. During this reaction, the Ser that is part of the protease active site of the proenzyme becomes the pyruvoyl prosthetic group, which constitutes an essential element of the active site of the mature decarboxylase.

The protein resides in the cell membrane. It carries out the reaction a 1,2-diacyl-sn-glycero-3-phospho-L-serine + H(+) = a 1,2-diacyl-sn-glycero-3-phosphoethanolamine + CO2. It functions in the pathway phospholipid metabolism; phosphatidylethanolamine biosynthesis; phosphatidylethanolamine from CDP-diacylglycerol: step 2/2. Its function is as follows. Catalyzes the formation of phosphatidylethanolamine (PtdEtn) from phosphatidylserine (PtdSer). This chain is Phosphatidylserine decarboxylase proenzyme, found in Clostridium perfringens (strain ATCC 13124 / DSM 756 / JCM 1290 / NCIMB 6125 / NCTC 8237 / Type A).